We begin with the raw amino-acid sequence, 695 residues long: Highly divergent homeobox (695 aa).

2 DNA-binding regions (homeobox) span residues Leu3–Ser63 and Ala440–Gly503. The segment at Arg56–Val81 is disordered. The interval Gln653–Leu695 is disordered. Residues Thr679–Leu695 are compositionally biased toward polar residues.

The protein localises to the nucleus. The polypeptide is Highly divergent homeobox (HDX) (Gallus gallus (Chicken)).